We begin with the raw amino-acid sequence, 92 residues long: Small ribosomal subunit protein uS19 (92 aa).

Belongs to the universal ribosomal protein uS19 family.

In terms of biological role, protein S19 forms a complex with S13 that binds strongly to the 16S ribosomal RNA. The sequence is that of Small ribosomal subunit protein uS19 from Paramagnetospirillum magneticum (strain ATCC 700264 / AMB-1) (Magnetospirillum magneticum).